The primary structure comprises 333 residues: PDZ domain-containing protein GIPC1 (333 aa).

Positions 1 to 11 are enriched in basic residues; that stretch reads MPLGLGRRKKA. The tract at residues 1–54 is disordered; sequence MPLGLGRRKKAPPLVENEEAEPGRGGLGVGEPGPLGGGGSGGPQMGLPPPPPAL. The segment covering 23 to 44 has biased composition (gly residues); it reads GRGGLGVGEPGPLGGGGSGGPQ. A Phosphoserine modification is found at Ser-68. Residues 133–213 form the PDZ domain; the sequence is EVEVFKSEDA…GRTFTLKLTE (81 aa). 3 positions are modified to phosphoserine: Ser-222, Ser-225, and Ser-232. The tract at residues 223 to 244 is disordered; sequence QRSAGGRPGSGPQLGTGRGTLR. The span at 228 to 240 shows a compositional bias: gly residues; the sequence is GRPGSGPQLGTGR. A Phosphothreonine modification is found at Thr-242. Position 247 is a phosphoserine (Ser-247).

This sequence belongs to the GIPC family. In terms of assembly, interacts with GLUT1 (C-terminus), ACTN1, KIF1B, MYO6, PLEKHG5, SDC4/syndecan-4 and SEMA4C/semaphorin-4C. Interacts with RGS19 C-terminus. Interacts with HTLV-I Tax through the PDZ domain. In terms of tissue distribution, widely expressed. Expressed in skeletal muscle (at protein level).

It is found in the cytoplasm. Its subcellular location is the membrane. Its function is as follows. May be involved in G protein-linked signaling. This is PDZ domain-containing protein GIPC1 (GIPC1) from Homo sapiens (Human).